The following is a 76-amino-acid chain: Kappa-scoloptoxin(15)-Ssd3a (76 aa).

The signal sequence occupies residues 1–23 (MEGKIIFICFLVVLLTLPELISS).

In terms of processing, contains 2 disulfide bonds. Expressed by the venom gland.

The protein resides in the secreted. Its function is as follows. Acts as a voltage-gated potassium channel inhibitor. In Scolopendra dehaani (Thai centipede), this protein is Kappa-scoloptoxin(15)-Ssd3a.